Here is a 447-residue protein sequence, read N- to C-terminus: Cytochrome c biogenesis protein CcsB (447 aa).

Transmembrane regions (helical) follow at residues Leu-28–Ile-48, Thr-87–Arg-107, and Ile-173–Ala-193.

This sequence belongs to the Ccs1/CcsB family. In terms of assembly, may interact with CcsA.

It localises to the cellular thylakoid membrane. In terms of biological role, required during biogenesis of c-type cytochromes (cytochrome c6 and cytochrome f) at the step of heme attachment. The sequence is that of Cytochrome c biogenesis protein CcsB from Microcystis aeruginosa (strain NIES-843 / IAM M-2473).